The sequence spans 439 residues: Beta-1,3-galactosyl-O-glycosyl-glycoprotein beta-1,6-N-acetylglucosaminyltransferase (439 aa).

Topologically, residues 1–11 (MVGWKKKKLCR) are cytoplasmic. The chain crosses the membrane as a helical; Signal-anchor for type II membrane protein span at residues 12–29 (GHHLWVLGCYMLLAVVSL). The Lumenal segment spans residues 30 to 439 (RLSLRFKCDV…RHKAIYGTEL (410 aa)). N-linked (GlcNAc...) asparagine; by host glycans are attached at residues Asn-71 and Asn-107. Intrachain disulfides connect Cys-72/Cys-229, Cys-163/Cys-383, Cys-184/Cys-211, and Cys-392/Cys-424.

This sequence belongs to the glycosyltransferase 14 family.

The protein resides in the host Golgi apparatus membrane. The catalysed reaction is a 3-O-[beta-D-galactosyl-(1-&gt;3)-N-acetyl-alpha-D-galactosaminyl]-L-seryl-[protein] + UDP-N-acetyl-alpha-D-glucosamine = 3-O-{beta-D-galactosyl-(1-&gt;3)-[N-acetyl-beta-D-glucosaminyl-(1-&gt;6)]-N-acetyl-alpha-D-galactosaminyl}-L-seryl-[protein] + UDP + H(+). The enzyme catalyses a 3-O-[beta-D-galactosyl-(1-&gt;3)-N-acetyl-alpha-D-galactosaminyl]-L-threonyl-[protein] + UDP-N-acetyl-alpha-D-glucosamine = a 3-O-{beta-D-galactosyl-(1-&gt;3)-[N-acetyl-beta-D-glucosaminyl-(1-&gt;6)]-N-acetyl-alpha-D-galactosaminyl}-L-threonyl-[protein] + UDP + H(+). It catalyses the reaction a beta-D-Gal-(1-&gt;4)-beta-D-GlcNAc-(1-&gt;3)-beta-D-Gal-(1-&gt;4)-beta-D-GlcNAc derivative + UDP-N-acetyl-alpha-D-glucosamine = a beta-D-Gal-(1-&gt;4)-beta-D-GlcNAc-(1-&gt;3)-[beta-D-GlcNAc-(1-&gt;6)]-beta-D-Gal-(1-&gt;4)-N-acetyl-beta-D-glucosaminyl derivative + UDP + H(+). It carries out the reaction 3-O-[N-acetyl-beta-D-glucosaminyl-(1-&gt;3)-N-acetyl-alpha-D-galactosaminyl]-L-seryl-[protein] + UDP-N-acetyl-alpha-D-glucosamine = 3-O-[N-acetyl-beta-D-glucosaminyl-(1-&gt;3)-[N-acetyl-beta-D-glucosaminyl-(1-&gt;6)]-N-acetyl-alpha-D-galactosaminyl]-L-seryl-[protein] + UDP + H(+). The catalysed reaction is a 3-O-[N-acetyl-beta-D-glucosaminyl-(1-&gt;3)-N-acetyl-alpha-D-galactosaminyl]-L-threonyl-[protein] + UDP-N-acetyl-alpha-D-glucosamine = 3-O-[N-acetyl-beta-D-glucosaminyl-(1-&gt;3)-[N-acetyl-beta-D-glucosaminyl-(1-&gt;6)]-N-acetyl-alpha-D-galactosaminyl]-L-threonyl-[protein] + UDP + H(+). The protein operates within protein modification; protein glycosylation. Its function is as follows. Non-essential glycosyltransferase that can synthesize all known mucin beta 6 N-acetylglucosaminides. Mediates core 2 and core 4 O-glycan branching, 2 important steps in mucin-type biosynthesis. Has also I-branching enzyme activity by converting linear into branched poly-N-acetyllactosaminoglycans. Contributes to the post-translational modifications of structural proteins. This chain is Beta-1,3-galactosyl-O-glycosyl-glycoprotein beta-1,6-N-acetylglucosaminyltransferase (Bo17), found in Bovine herpesvirus 4 (BoHV-4).